A 339-amino-acid chain; its full sequence is Glucokinase (339 aa).

An ATP-binding site is contributed by 16-21 (GDIGGT).

It belongs to the bacterial glucokinase family.

The protein resides in the cytoplasm. The catalysed reaction is D-glucose + ATP = D-glucose 6-phosphate + ADP + H(+). The sequence is that of Glucokinase from Pseudomonas paraeruginosa (strain DSM 24068 / PA7) (Pseudomonas aeruginosa (strain PA7)).